The following is a 483-amino-acid chain: Membrane-bound lytic murein transglycosylase F (483 aa).

Residues 1-18 form the signal peptide; sequence MKGLIARFIAGFALLLWA. Residues 19–267 are non-LT domain; the sequence is WDMVFPWQQL…RIEEKYFNHL (249 aa). An LT domain region spans residues 269–483; it reads HFDYVDIQSY…SKESDSTLKE (215 aa). The active site involves Glu-312. Positions 458 to 483 are disordered; that stretch reads QQIQNNEEQPSVPQEISKESDSTLKE. Basic and acidic residues predominate over residues 473–483; it reads ISKESDSTLKE.

This sequence in the N-terminal section; belongs to the bacterial solute-binding protein 3 family. In the C-terminal section; belongs to the transglycosylase Slt family.

It localises to the cell outer membrane. The enzyme catalyses Exolytic cleavage of the (1-&gt;4)-beta-glycosidic linkage between N-acetylmuramic acid (MurNAc) and N-acetylglucosamine (GlcNAc) residues in peptidoglycan, from either the reducing or the non-reducing ends of the peptidoglycan chains, with concomitant formation of a 1,6-anhydrobond in the MurNAc residue.. In terms of biological role, murein-degrading enzyme that degrades murein glycan strands and insoluble, high-molecular weight murein sacculi, with the concomitant formation of a 1,6-anhydromuramoyl product. Lytic transglycosylases (LTs) play an integral role in the metabolism of the peptidoglycan (PG) sacculus. Their lytic action creates space within the PG sacculus to allow for its expansion as well as for the insertion of various structures such as secretion systems and flagella. In Actinobacillus pleuropneumoniae serotype 3 (strain JL03), this protein is Membrane-bound lytic murein transglycosylase F.